A 173-amino-acid polypeptide reads, in one-letter code: Large ribosomal subunit protein uL10 (173 aa).

This sequence belongs to the universal ribosomal protein uL10 family. Part of the ribosomal stalk of the 50S ribosomal subunit. The N-terminus interacts with L11 and the large rRNA to form the base of the stalk. The C-terminus forms an elongated spine to which L12 dimers bind in a sequential fashion forming a multimeric L10(L12)X complex.

In terms of biological role, forms part of the ribosomal stalk, playing a central role in the interaction of the ribosome with GTP-bound translation factors. The polypeptide is Large ribosomal subunit protein uL10 (Geobacter sp. (strain M21)).